The chain runs to 114 residues: Small ribosomal subunit protein bS6 (114 aa).

It belongs to the bacterial ribosomal protein bS6 family.

Binds together with bS18 to 16S ribosomal RNA. The protein is Small ribosomal subunit protein bS6 of Protochlamydia amoebophila (strain UWE25).